Reading from the N-terminus, the 360-residue chain is Terpene synthase 5 (360 aa).

The DDxx(x)D/E motif signature appears at 87–92 (DDFLER). Residues 237 to 245 (NDCVSYAKE) carry the NDxxSxxxD/E motif motif.

Belongs to the terpene synthase family.

Functionally, terpene synthase that converts its substrate farnesyl diphosphate (FPP) into 2 yet unidentified sesquiterpenes. The polypeptide is Terpene synthase 5 (Dictyostelium purpureum (Slime mold)).